The primary structure comprises 159 residues: Phosphopantetheine adenylyltransferase (159 aa).

A substrate-binding site is contributed by Ser9. Residues 9–10 (SF) and His17 contribute to the ATP site. Residues Lys41, Leu73, and Lys87 each contribute to the substrate site. ATP contacts are provided by residues 88–90 (GLR), Glu98, and 122–128 (YSFLSSS).

The protein belongs to the bacterial CoaD family. As to quaternary structure, homohexamer. Requires Mg(2+) as cofactor.

It is found in the cytoplasm. The enzyme catalyses (R)-4'-phosphopantetheine + ATP + H(+) = 3'-dephospho-CoA + diphosphate. It participates in cofactor biosynthesis; coenzyme A biosynthesis; CoA from (R)-pantothenate: step 4/5. In terms of biological role, reversibly transfers an adenylyl group from ATP to 4'-phosphopantetheine, yielding dephospho-CoA (dPCoA) and pyrophosphate. This is Phosphopantetheine adenylyltransferase from Streptomyces avermitilis (strain ATCC 31267 / DSM 46492 / JCM 5070 / NBRC 14893 / NCIMB 12804 / NRRL 8165 / MA-4680).